The sequence spans 88 residues: Small ribosomal subunit protein bS20 (88 aa).

This sequence belongs to the bacterial ribosomal protein bS20 family.

Binds directly to 16S ribosomal RNA. In Rhodopseudomonas palustris (strain BisB18), this protein is Small ribosomal subunit protein bS20.